A 1716-amino-acid chain; its full sequence is DNA-directed RNA polymerase I subunit RPA1 (1716 aa).

Zn(2+) is bound by residues Cys-64, Cys-67, Cys-74, His-77, Cys-104, and Cys-107. Residues 110-201 form a clamp region; it reads LTCPRAAIHL…VAHFWKTHMA (92 aa). Residues Cys-205 and Cys-208 each coordinate Zn(2+). Residues 327-433 form a clamp region; sequence FTNGQTVNLQ…IRQILEKKEG (107 aa). Positions 410–423 are rudder; the sequence is DSDMDKLMLEKYPG. Residues Lys-431, Arg-436, and Arg-443 each coordinate DNA. The involved in RRN3 binding to Pol I complex stretch occupies residues 475 to 549; the sequence is YPQPVTPWNV…QGAKVVCRHV (75 aa). An RNA-binding site is contributed by Arg-559. Mg(2+) is bound by residues Asp-595, Asp-597, and Asp-599. Position 599 (Asp-599) interacts with RNA. Residues 812–890 are funnel; that stretch reads KPNADVMRQR…NEINKACMPF (79 aa). The segment at 967–1008 is bridging helix; sequence RPPEFFFHCMAGREGLVDTAVKTSRSGYLQRCIIKHLEGLVI. The interval 1067–1162 is mediates the interaction with TOP2A; it reads ADPQKVLRHF…SLSVWRPDIH (96 aa). Residues 1214–1255 form a trigger loop region; the sequence is PGEAVGLLAAQSIGEPSTQMTLNTFHFAGRGEMNVTLGIPRL. Arg-1256 contributes to the DNA binding site. Residues 1368-1493 form a disordered region; that stretch reads ASAFRSVNTR…RHSRPQGAEA (126 aa). A compositionally biased stretch (basic and acidic residues) spans 1380–1397; the sequence is TQKDLDDTEDSGRNRREE. Composition is skewed to acidic residues over residues 1398 to 1419 and 1429 to 1451; these read ERDEEEEGNIVDAEAEEGDADA and EEEVDYESEEEGEEEEEEDVQEE. The segment covering 1452–1464 has biased composition (basic and acidic residues); it reads ENIKGEGAHQTHE. Acidic residues predominate over residues 1465 to 1477; sequence PDEEEGSGLEEES.

This sequence belongs to the RNA polymerase beta' chain family. In terms of assembly, component of the RNA polymerase I (Pol I) complex consisting of 13 subunits: a ten-subunit catalytic core composed of POLR1A/RPA1, POLR1B/RPA2, POLR1C/RPAC1, POLR1D/RPAC2, POLR1H/RPA12, POLR2E/RPABC1, POLR2F/RPABC2, POLR2H/RPABC3, POLR2K/RPABC4 and POLR2L/RPABC5; a mobile stalk subunit POLR1F/RPA43 protruding from the core and additional subunits homologous to general transcription factors POLR1E/RPA49 and POLR1G/RPA34. Part of Pol I pre-initiation complex (PIC), in which Pol I core assembles with RRN3 and promoter-bound UTBF and SL1/TIF-IB complex. Interacts (via dock II domain) with TOP2A; this interaction may assist Pol I transcription initiation by releasing supercoils occurring during DNA unwinding. Interacts with CAVIN1; this interaction induces the dissociation of Pol I complex paused at rDNA terminator sequences. Interacts with MYO1C. Interacts with ERBB2. Interacts with DDX11. Interacts with RECQL5. The cofactor is Mg(2+). Phosphorylated.

Its subcellular location is the nucleus. The protein resides in the nucleolus. The protein localises to the chromosome. The catalysed reaction is RNA(n) + a ribonucleoside 5'-triphosphate = RNA(n+1) + diphosphate. In terms of biological role, catalytic core component of RNA polymerase I (Pol I), a DNA-dependent RNA polymerase which synthesizes ribosomal RNA precursors using the four ribonucleoside triphosphates as substrates. Transcribes 47S pre-rRNAs from multicopy rRNA gene clusters, giving rise to 5.8S, 18S and 28S ribosomal RNAs. Pol I-mediated transcription cycle proceeds through transcription initiation, transcription elongation and transcription termination stages. During transcription initiation, Pol I pre-initiation complex (PIC) is recruited by the selectivity factor 1 (SL1/TIF-IB) complex bound to the core promoter that precedes an rDNA repeat unit. The PIC assembly bends the promoter favoring the formation of the transcription bubble and promoter escape. Once the polymerase has escaped from the promoter it enters the elongation phase during which RNA is actively polymerized, based on complementarity with the template DNA strand. Highly processive, assembles in structures referred to as 'Miller trees' where many elongating Pol I complexes queue and transcribe the same rDNA coding regions. At terminator sequences downstream of the rDNA gene, PTRF interacts with Pol I and halts Pol I transcription leading to the release of the RNA transcript and polymerase from the DNA. Forms Pol I active center together with the second largest subunit POLR1B/RPA2. Appends one nucleotide at a time to the 3' end of the nascent RNA, with POLR1A/RPA1 contributing a Mg(2+)-coordinating DxDGD motif, and POLR1B/RPA2 participating in the coordination of a second Mg(2+) ion and providing lysine residues believed to facilitate Watson-Crick base pairing between the incoming nucleotide and the template base. Typically, Mg(2+) ions direct a 5' nucleoside triphosphate to form a phosphodiester bond with the 3' hydroxyl of the preceding nucleotide of the nascent RNA, with the elimination of pyrophosphate. Has proofreading activity: Pauses and backtracks to allow the cleavage of a missincorporated nucleotide via POLR1H/RPA12. High Pol I processivity is associated with decreased transcription fidelity. The sequence is that of DNA-directed RNA polymerase I subunit RPA1 from Rattus norvegicus (Rat).